The primary structure comprises 111 residues: Large ribosomal subunit protein uL22 (111 aa).

The protein belongs to the universal ribosomal protein uL22 family. As to quaternary structure, part of the 50S ribosomal subunit.

This protein binds specifically to 23S rRNA; its binding is stimulated by other ribosomal proteins, e.g. L4, L17, and L20. It is important during the early stages of 50S assembly. It makes multiple contacts with different domains of the 23S rRNA in the assembled 50S subunit and ribosome. In terms of biological role, the globular domain of the protein is located near the polypeptide exit tunnel on the outside of the subunit, while an extended beta-hairpin is found that lines the wall of the exit tunnel in the center of the 70S ribosome. The chain is Large ribosomal subunit protein uL22 from Citrifermentans bemidjiense (strain ATCC BAA-1014 / DSM 16622 / JCM 12645 / Bem) (Geobacter bemidjiensis).